A 504-amino-acid chain; its full sequence is Maturase K (504 aa).

It belongs to the intron maturase 2 family. MatK subfamily.

It is found in the plastid. The protein resides in the chloroplast. Usually encoded in the trnK tRNA gene intron. Probably assists in splicing its own and other chloroplast group II introns. The chain is Maturase K from Taxus baccata (English yew).